The following is a 69-amino-acid chain: Large ribosomal subunit protein bL31 (69 aa).

Zn(2+) contacts are provided by C16, C18, C37, and C40.

Belongs to the bacterial ribosomal protein bL31 family. Type A subfamily. As to quaternary structure, part of the 50S ribosomal subunit. Requires Zn(2+) as cofactor.

In terms of biological role, binds the 23S rRNA. In Buchnera aphidicola subsp. Baizongia pistaciae (strain Bp), this protein is Large ribosomal subunit protein bL31.